Consider the following 1332-residue polypeptide: Sister chromatid cohesion protein PDS5 homolog A (1332 aa).

N-acetylmethionine is present on methionine 1. Residues 392 to 428 (ALVNDQLLGFVRERTLDKRWRVRKEAMMGLAQLYKKY) form an HEAT repeat. Serine 1096 carries the post-translational modification Phosphoserine. Positions 1138-1332 (GVLGTVNKPL…PAERQIDLQR (195 aa)) are disordered. Lysine 1145 is subject to N6-acetyllysine. Polar residues predominate over residues 1160–1173 (GTETGSNINANSEL). Residues serine 1174 and serine 1194 each carry the phosphoserine modification. Threonine 1207 is modified (phosphothreonine). Position 1210 is an N6-acetyllysine (lysine 1210). The span at 1222 to 1232 (SDQSTQGNISS) shows a compositional bias: polar residues. Lysine 1288 bears the N6-acetyllysine mark. Serine 1303 is modified (phosphoserine). Over residues 1316 to 1332 (DGAKKAVPAERQIDLQR) the composition is skewed to basic and acidic residues.

This sequence belongs to the PDS5 family. Interacts with the cohesin complex. Interacts with WAPL (via FGF motifs) or CDCA5 (via the FGF motif); the interaction is direct, cohesin-dependent and competitive. Interacts with SMC3. Interacts with TP63.

The protein resides in the nucleus. Functionally, probable regulator of sister chromatid cohesion in mitosis which may stabilize cohesin complex association with chromatin. May couple sister chromatid cohesion during mitosis to DNA replication. Cohesion ensures that chromosome partitioning is accurate in both meiotic and mitotic cells and plays an important role in DNA repair. The protein is Sister chromatid cohesion protein PDS5 homolog A (Pds5a) of Mus musculus (Mouse).